Here is a 1273-residue protein sequence, read N- to C-terminus: Probable methionine synthase (1273 aa).

Residues 7–327 (FKELADIAKE…DHINAMYKAV (321 aa)) enclose the Hcy-binding domain. Zn(2+) contacts are provided by C249, C312, and C313. Residues 360 to 621 (FVNIGERCNV…IDKPLLQLLE (262 aa)) enclose the Pterin-binding domain. Residues 652-749 (KTDEWRNTSV…FMDAERQANI (98 aa)) enclose the B12-binding N-terminal domain. Methylcob(III)alamin-binding positions include E699, 772-776 (GDVHD), H775, S820, T824, and A876. The B12-binding domain occupies 762–897 (QGTVVIATVK…DMTVRDAFLQ (136 aa)). One can recognise an AdoMet activation domain in the interval 927–1273 (SLKDRRFVAL…LSPIIGYELD (347 aa)). S-adenosyl-L-methionine contacts are provided by residues D977, R1171, and 1225–1226 (YF).

Belongs to the vitamin-B12 dependent methionine synthase family. Methylcob(III)alamin serves as cofactor. The cofactor is Zn(2+).

It carries out the reaction (6S)-5-methyl-5,6,7,8-tetrahydrofolate + L-homocysteine = (6S)-5,6,7,8-tetrahydrofolate + L-methionine. The protein operates within amino-acid biosynthesis; L-methionine biosynthesis via de novo pathway; L-methionine from L-homocysteine (MetH route): step 1/1. Functionally, catalyzes the transfer of a methyl group from methyl-cobalamin to homocysteine, yielding enzyme-bound cob(I)alamin and methionine. Subsequently, remethylates the cofactor using methyltetrahydrofolate. This chain is Probable methionine synthase (metr-1), found in Caenorhabditis briggsae.